Here is a 591-residue protein sequence, read N- to C-terminus: NADP-dependent malic enzyme (591 aa).

Residues 1–10 show a composition bias toward basic and acidic residues; the sequence is MESTLKEMRD. The interval 1-26 is disordered; it reads MESTLKEMRDGASVLDMDPKSTVGGG. Tyr139 serves as the catalytic Proton donor. Arg192 serves as a coordination point for NAD(+). Residue Lys210 is the Proton acceptor of the active site. A divalent metal cation is bound by residues Glu282, Asp283, and Asp306. Residue Asp306 participates in NAD(+) binding. 335-351 serves as a coordination point for NADP(+); the sequence is LFLGAGEAGTGIAELIA. Asn447 contributes to the NAD(+) binding site.

This sequence belongs to the malic enzymes family. In terms of assembly, homotetramer. Mg(2+) serves as cofactor. Mn(2+) is required as a cofactor. MRNA found twofold higher in leaves and stems than in roots.

It is found in the cytoplasm. It catalyses the reaction (S)-malate + NADP(+) = pyruvate + CO2 + NADPH. The catalysed reaction is oxaloacetate + H(+) = pyruvate + CO2. The polypeptide is NADP-dependent malic enzyme (Populus trichocarpa (Western balsam poplar)).